A 490-amino-acid chain; its full sequence is ATP synthase subunit beta, chloroplastic (490 aa).

170 to 177 (GGAGVGKT) contacts ATP.

Belongs to the ATPase alpha/beta chains family. As to quaternary structure, F-type ATPases have 2 components, CF(1) - the catalytic core - and CF(0) - the membrane proton channel. CF(1) has five subunits: alpha(3), beta(3), gamma(1), delta(1), epsilon(1). CF(0) has four main subunits: a(1), b(1), b'(1) and c(9-12).

It localises to the plastid. Its subcellular location is the chloroplast thylakoid membrane. The enzyme catalyses ATP + H2O + 4 H(+)(in) = ADP + phosphate + 5 H(+)(out). Its function is as follows. Produces ATP from ADP in the presence of a proton gradient across the membrane. The catalytic sites are hosted primarily by the beta subunits. The sequence is that of ATP synthase subunit beta, chloroplastic from Calystegia sepium (Hedge bindweed).